The chain runs to 476 residues: Ribulose bisphosphate carboxylase large chain (476 aa).

Asparagine 124 and threonine 174 together coordinate substrate. Lysine 176 functions as the Proton acceptor in the catalytic mechanism. Position 178 (lysine 178) interacts with substrate. Mg(2+) is bound by residues lysine 202, aspartate 204, and glutamate 205. Lysine 202 is modified (N6-carboxylysine). Histidine 295 serves as the catalytic Proton acceptor. Residues arginine 296, histidine 328, and serine 380 each coordinate substrate.

The protein belongs to the RuBisCO large chain family. Type I subfamily. Heterohexadecamer of 8 large chains and 8 small chains; disulfide-linked. The disulfide link is formed within the large subunit homodimers. Requires Mg(2+) as cofactor. In terms of processing, the disulfide bond which can form in the large chain dimeric partners within the hexadecamer appears to be associated with oxidative stress and protein turnover.

It localises to the carboxysome. It carries out the reaction 2 (2R)-3-phosphoglycerate + 2 H(+) = D-ribulose 1,5-bisphosphate + CO2 + H2O. It catalyses the reaction D-ribulose 1,5-bisphosphate + O2 = 2-phosphoglycolate + (2R)-3-phosphoglycerate + 2 H(+). Functionally, ruBisCO catalyzes two reactions: the carboxylation of D-ribulose 1,5-bisphosphate, the primary event in carbon dioxide fixation, as well as the oxidative fragmentation of the pentose substrate in the photorespiration process. Both reactions occur simultaneously and in competition at the same active site. This is Ribulose bisphosphate carboxylase large chain from Trichodesmium erythraeum (strain IMS101).